We begin with the raw amino-acid sequence, 185 residues long: Large ribosomal subunit protein uL5 (185 aa).

This sequence belongs to the universal ribosomal protein uL5 family. In terms of assembly, part of the 50S ribosomal subunit; part of the 5S rRNA subcomplex. Contacts the 5S rRNA and the P site tRNA. Forms a bridge to the 30S subunit in the 70S ribosome. Both N-terminus methionine truncation and retention have been observed for this protein. Post-translationally, may be methylated twice, on undetermined residues.

In terms of biological role, this is one of the proteins that bind and probably mediate the attachment of the 5S RNA into the large ribosomal subunit, where it forms part of the central protuberance. In the 70S ribosome it contacts protein S13 of the 30S subunit (bridge B1b), connecting the 2 subunits; this bridge is implicated in subunit movement. Contacts the P site tRNA; the 5S rRNA and some of its associated proteins might help stabilize positioning of ribosome-bound tRNAs. This is Large ribosomal subunit protein uL5 from Rhodopseudomonas palustris (strain ATCC BAA-98 / CGA009).